The following is a 135-amino-acid chain: Class I hydrophobin dewB (135 aa).

An N-terminal signal peptide occupies residues Met1–Ala17. 4 disulfides stabilise this stretch: Cys35–Cys109, Cys43–Cys103, Cys44–Cys84, and Cys110–Cys128.

It belongs to the fungal hydrophobin family. Self-assembles to form functional amyloid fibrils called rodlets. Self-assembly into fibrillar rodlets occurs spontaneously at hydrophobic:hydrophilic interfaces and the rodlets further associate laterally to form amphipathic monolayers.

It is found in the secreted. Its subcellular location is the spore wall. Aerial growth, conidiation, and dispersal of filamentous fungi in the environment rely upon a capability of their secreting small amphipathic proteins called hydrophobins (HPBs) with low sequence identity. Class I can self-assemble into an outermost layer of rodlet bundles on aerial cell surfaces, conferring cellular hydrophobicity that supports fungal growth, development and dispersal; whereas Class II form highly ordered films at water-air interfaces through intermolecular interactions but contribute nothing to the rodlet structure. DewB is a class I hydrophobin that contributes to the hydrophobicity of the spore surface. The protein is Class I hydrophobin dewB of Emericella nidulans (strain FGSC A4 / ATCC 38163 / CBS 112.46 / NRRL 194 / M139) (Aspergillus nidulans).